We begin with the raw amino-acid sequence, 1403 residues long: Baculoviral IAP repeat-containing protein 1f (1403 aa).

BIR repeat units lie at residues 60-127, 159-227, and 278-345; these read EAKR…CEFL, EEAR…CEFL, and EELR…CVFL. Residues cysteine 315, cysteine 318, histidine 335, and cysteine 342 each coordinate Zn(2+). Positions 464 to 759 constitute an NACHT domain; it reads SVMCVEGEAG…EFLAAVRLTE (296 aa). 473 to 478 contacts ATP; that stretch reads GSGKTT.

As to quaternary structure, component of the NLRC4 inflammasome, at least composed of NLRC4, caspase-1 (CASP1) and some NAIP protein. In terms of assembly, (Microbial infection) Interacts with S.typhimurium (Salmonella) flagellin.

Its function is as follows. Sensor component of the NLRC4 inflammasome that specifically recognizes and binds flagellin from pathogenic bacteria. Association of pathogenic bacteria proteins drives in turn drive assembly and activation of the NLRC4 inflammasome, promoting caspase-1 activation, cytokine production and macrophage pyroptosis. The NLRC4 inflammasome is activated as part of the innate immune response to a range of intracellular bacteria. The NLRC4 inflammasome senses Gram-negative bacteria such as L.pneumophila and P.aeruginosa, enteric pathogens S.typhimurium (Salmonella) and S.flexneri. May contribute to prevent motor-neuron apoptosis induced by a variety of signals. This Mus musculus (Mouse) protein is Baculoviral IAP repeat-containing protein 1f (Naip6).